Here is a 313-residue protein sequence, read N- to C-terminus: Small ribosomal subunit protein uS2 (313 aa).

Residues 233-256 show a composition bias toward basic and acidic residues; the sequence is RTMTDKQSDVAKEAKADGKEEAPK. Positions 233-293 are disordered; the sequence is RTMTDKQSDV…SRKLVAAGTA (61 aa).

This sequence belongs to the universal ribosomal protein uS2 family.

This is Small ribosomal subunit protein uS2 from Bdellovibrio bacteriovorus (strain ATCC 15356 / DSM 50701 / NCIMB 9529 / HD100).